Here is a 628-residue protein sequence, read N- to C-terminus: Chaperone protein HtpG (628 aa).

Positions 1–337 are a; substrate-binding; that stretch reads MSEKKYTFET…SADLPLNVSR (337 aa). A b region spans residues 338–554; sequence EILQHNKVID…DYGMSLHMQK (217 aa). A c region spans residues 555-628; it reads MMEEAGQSFM…FVKLVNKYIR (74 aa).

It belongs to the heat shock protein 90 family. In terms of assembly, homodimer.

It localises to the cytoplasm. Its function is as follows. Molecular chaperone. Has ATPase activity. The protein is Chaperone protein HtpG of Francisella tularensis subsp. tularensis (strain WY96-3418).